The sequence spans 359 residues: UDP-3-O-acylglucosamine N-acyltransferase (359 aa).

Histidine 253 (proton acceptor) is an active-site residue.

It belongs to the transferase hexapeptide repeat family. LpxD subfamily. Homotrimer.

It catalyses the reaction a UDP-3-O-[(3R)-3-hydroxyacyl]-alpha-D-glucosamine + a (3R)-hydroxyacyl-[ACP] = a UDP-2-N,3-O-bis[(3R)-3-hydroxyacyl]-alpha-D-glucosamine + holo-[ACP] + H(+). The protein operates within bacterial outer membrane biogenesis; LPS lipid A biosynthesis. In terms of biological role, catalyzes the N-acylation of UDP-3-O-acylglucosamine using 3-hydroxyacyl-ACP as the acyl donor. Is involved in the biosynthesis of lipid A, a phosphorylated glycolipid that anchors the lipopolysaccharide to the outer membrane of the cell. In Burkholderia cenocepacia (strain ATCC BAA-245 / DSM 16553 / LMG 16656 / NCTC 13227 / J2315 / CF5610) (Burkholderia cepacia (strain J2315)), this protein is UDP-3-O-acylglucosamine N-acyltransferase.